The following is a 237-amino-acid chain: rRNA-processing protein EFG1 (237 aa).

A disordered region spans residues 1-24; the sequence is MPKTVKNPKNNKSRSRGAPIQVAE. 2 coiled-coil regions span residues 53–113 and 166–186; these read DKKI…ISQT and LKIT…LMEE. Residues 206 to 237 are disordered; the sequence is NDKTQKAVLTEEIDAPEQKQDEQQEEQDDFFE. A compositionally biased stretch (acidic residues) spans 228–237; it reads QQEEQDDFFE.

The protein belongs to the EFG1 family.

Its subcellular location is the nucleus. The protein resides in the nucleolus. Its function is as follows. Involved in rRNA processing. This is rRNA-processing protein EFG1 from Candida albicans (strain SC5314 / ATCC MYA-2876) (Yeast).